We begin with the raw amino-acid sequence, 684 residues long: Galactocerebrosidase (684 aa).

The first 42 residues, 1-42 (MANSQPKASQQRQAKVMTAAAGSASRVAVPLLLCALLVPGGA), serve as a signal peptide directing secretion. 3 residues coordinate substrate: Thr109, Trp151, and Asn197. The active-site Proton donor/acceptor is Glu198. Glu274 acts as the Nucleophile in catalysis. A disulfide bond links Cys287 and Cys394. N-linked (GlcNAc...) asparagine glycans are attached at residues Asn300 and Asn379. Residue Arg396 participates in substrate binding. N-linked (GlcNAc...) asparagine glycosylation is found at Asn403, Asn558, Asn601, and Asn645.

This sequence belongs to the glycosyl hydrolase 59 family. As to expression, detected in brain and kidney.

It is found in the lysosome. The catalysed reaction is a beta-D-galactosyl-(1&lt;-&gt;1')-N-acylsphing-4-enine + H2O = an N-acylsphing-4-enine + D-galactose. The enzyme catalyses a D-galactosylceramide + H2O = an N-acyl-sphingoid base + D-galactose. It catalyses the reaction beta-D-galactosyl-(1&lt;-&gt;1)-sphing-4-enine + H2O = sphing-4-enine + D-galactose. Hydrolyzes the galactose ester bonds of glycolipids such as galactosylceramide and galactosylsphingosine. Enzyme with very low activity responsible for the lysosomal catabolism of galactosylceramide, a major lipid in myelin, kidney and epithelial cells of small intestine and colon. This chain is Galactocerebrosidase, found in Mus musculus (Mouse).